A 437-amino-acid chain; its full sequence is Elongation factor 1-gamma-B (437 aa).

One can recognise a GST N-terminal domain in the interval 2-87 (AGGTLYTYPD…YVANDELRGS (86 aa)). The 134-residue stretch at 89–222 (NRLHQAQVIQ…KMAQFDAKKF (134 aa)) folds into the GST C-terminal domain. A compositionally biased stretch (basic and acidic residues) spans 225 to 240 (VQPKKETPKKEKPAKE). The disordered stretch occupies residues 225 to 279 (VQPKKETPKKEKPAKEPKKKKKKKKKATPAPAPAPEDDLDESEKALAAEPKSKDP). The span at 241–251 (PKKKKKKKKKA) shows a compositional bias: basic residues. Positions 266–279 (SEKALAAEPKSKDP) are enriched in basic and acidic residues. The region spanning 276 to 437 (SKDPYAHLPK…KAFNQGKIFK (162 aa)) is the EF-1-gamma C-terminal domain.

EF-1 is composed of four subunits: alpha, beta, delta, and gamma.

Its function is as follows. Probably plays a role in anchoring the complex to other cellular components. In Xenopus laevis (African clawed frog), this protein is Elongation factor 1-gamma-B (eef1g-b).